Reading from the N-terminus, the 240-residue chain is Uridylate kinase (240 aa).

13–16 provides a ligand contact to ATP; it reads KFSG. Residue glycine 55 participates in UMP binding. ATP is bound by residues glycine 56 and arginine 60. Residues aspartate 76 and 137-144 contribute to the UMP site; that span reads TGNPFFTT. ATP contacts are provided by threonine 164, tyrosine 170, and aspartate 173.

Belongs to the UMP kinase family. Homohexamer.

It localises to the cytoplasm. The catalysed reaction is UMP + ATP = UDP + ADP. It functions in the pathway pyrimidine metabolism; CTP biosynthesis via de novo pathway; UDP from UMP (UMPK route): step 1/1. Its activity is regulated as follows. Inhibited by UTP. In terms of biological role, catalyzes the reversible phosphorylation of UMP to UDP. The chain is Uridylate kinase from Helicobacter pylori (strain HPAG1).